The primary structure comprises 462 residues: Tryptophan dimethylallyltransferase ifgA (462 aa).

Residues 83–84 and Glu-92 each bind L-tryptophan; that span reads IL. The substrate site is built by Arg-103, Lys-189, and Tyr-191. L-tryptophan-binding residues include Tyr-193 and Arg-246. 5 residues coordinate substrate: Arg-259, Lys-261, Tyr-263, Gln-345, and Tyr-347.

This sequence belongs to the tryptophan dimethylallyltransferase family. In terms of assembly, homodimer.

It catalyses the reaction L-tryptophan + dimethylallyl diphosphate = 4-(3-methylbut-2-enyl)-L-tryptophan + diphosphate. It functions in the pathway alkaloid biosynthesis; ergot alkaloid biosynthesis. In terms of biological role, tryptophan dimethylallyltransferase; part of the gene cluster that mediates the biosynthesis of isofumigaclavines, fungal ergot alkaloids. The tryptophan dimethylallyltransferase ifgA catalyzes the first step of ergot alkaloid biosynthesis by condensing dimethylallyl diphosphate (DMAP) and tryptophan to form 4-dimethylallyl-L-tryptophan. The second step is catalyzed by the methyltransferase ifgB that methylates 4-dimethylallyl-L-tryptophan in the presence of S-adenosyl-L-methionine, resulting in the formation of N-methyl-dimethylallyl-L-tryptophan. The catalase ifgD and the FAD-dependent oxidoreductase ifgC then transform N-methyl-dimethylallyl-L-tryptophan to chanoclavine-I which is further oxidized by ifgE in the presence of NAD(+), resulting in the formation of chanoclavine-I aldehyde. The chanoclavine-I aldehyde reductases ifgG and/or fgaOx3 reduce chanoclavine-I aldehyde to dihydrochanoclavine-I aldehyde that spontaneously dehydrates to form 6,8-dimethyl-6,7-didehydroergoline. The festuclavine dehydrogenases ifgF1 and/or ifgF2 then catalyze the reduction of 6,8-dimethyl-6,7-didehydroergoline to form festuclavine. Hydrolysis of festuclavine by a yet undetermined cytochrome P450 monooxygenase (called ifgH) then leads to the formation of isofumigaclavine B which is in turn acetylated by ifgI to isofumigaclavine A. Penicillium roqueforti has interestingly at least two sets of genes for the consumption of chanoclavine-I aldehyde on three different loci, the OYEs ifgG/fgaOx3 and the festuclavine synthase homologs ifgF1/ifgF2. The reason for the duplication of these genes is unclear, probably to ensure the conversion of chanoclavine-I aldehyde by differential gene expression under various environmental conditions. In Penicillium roqueforti (strain FM164), this protein is Tryptophan dimethylallyltransferase ifgA.